Here is a 944-residue protein sequence, read N- to C-terminus: Proline and serine-rich protein 1 (944 aa).

Met1 is subject to N-acetylmethionine. 4 disordered regions span residues 233-285 (PPPY…PVPT), 369-396 (PGPSATPTAATPTPGPTPRSTLGSSEAF), 608-633 (KTEPTSPTPSAFKGPSHSGNPSHGTL), and 912-944 (ESYPAQPDGFPSYPSAPGTPFSLQPSLSQSGWQ). The span at 248-274 (LSNPSKPIQNQTFSTPASQLFSPHGSN) shows a compositional bias: polar residues. A compositionally biased stretch (low complexity) spans 275–285 (PSTPAATPVPT). Positions 932 to 944 (FSLQPSLSQSGWQ) are enriched in polar residues.

As to quaternary structure, interacts with TET2 and OGT; this interaction mediates TET2 O-GlcNAcylation and stability by promoting the interaction between OGT and TET2. Interacts with KDM6A. Interacts with TET1. Glycosylated. Interaction with OGT leads to GlcNAcylation.

In terms of biological role, mediates OGT interaction with and O-GlcNAcylation of TET2 to control TET2 stabilization at enhancers and CpG islands (CGIs). This chain is Proline and serine-rich protein 1, found in Homo sapiens (Human).